We begin with the raw amino-acid sequence, 157 residues long: Phosphopantetheine adenylyltransferase (157 aa).

Threonine 10 is a binding site for substrate. ATP contacts are provided by residues 10-11 (TF) and histidine 18. The substrate site is built by lysine 42, leucine 74, and arginine 88. ATP contacts are provided by residues 89–91 (GLR), glutamate 99, and 124–130 (NAFISSS).

It belongs to the bacterial CoaD family. In terms of assembly, homohexamer. Requires Mg(2+) as cofactor.

It is found in the cytoplasm. It catalyses the reaction (R)-4'-phosphopantetheine + ATP + H(+) = 3'-dephospho-CoA + diphosphate. It functions in the pathway cofactor biosynthesis; coenzyme A biosynthesis; CoA from (R)-pantothenate: step 4/5. Functionally, reversibly transfers an adenylyl group from ATP to 4'-phosphopantetheine, yielding dephospho-CoA (dPCoA) and pyrophosphate. This chain is Phosphopantetheine adenylyltransferase, found in Helicobacter acinonychis (strain Sheeba).